Reading from the N-terminus, the 203-residue chain is Secreted RxLR effector protein RXLR-C28 (203 aa).

An N-terminal signal peptide occupies residues 1–24; that stretch reads MKAVKLTAAVVVLFMAPYVPITSS. Asparagine 32 carries an N-linked (GlcNAc...) asparagine glycan. The short motif at 37–40 is the RxLR element; sequence RHLR. A glycan (N-linked (GlcNAc...) asparagine) is linked at asparagine 193.

The protein belongs to the RxLR effector family.

The protein localises to the secreted. The protein resides in the host cytoplasm. In terms of biological role, secreted effector that does not suppress pattern-triggered immunity (PTI) in plant host. The polypeptide is Secreted RxLR effector protein RXLR-C28 (Plasmopara halstedii (Downy mildew of sunflower)).